The primary structure comprises 608 residues: Membrane protein insertase YidC (608 aa).

The helical transmembrane segment at Leu8–Pro28 threads the bilayer. The tract at residues Pro33–Thr61 is disordered. 5 consecutive transmembrane segments (helical) span residues Met378–Tyr398, Leu448–Leu468, Leu482–Pro502, Ser506–Val526, and Ile542–Val562.

It belongs to the OXA1/ALB3/YidC family. Type 1 subfamily. As to quaternary structure, interacts with the Sec translocase complex via SecD. Specifically interacts with transmembrane segments of nascent integral membrane proteins during membrane integration.

It is found in the cell inner membrane. In terms of biological role, required for the insertion and/or proper folding and/or complex formation of integral membrane proteins into the membrane. Involved in integration of membrane proteins that insert both dependently and independently of the Sec translocase complex, as well as at least some lipoproteins. Aids folding of multispanning membrane proteins. In Ruegeria sp. (strain TM1040) (Silicibacter sp.), this protein is Membrane protein insertase YidC.